Here is a 184-residue protein sequence, read N- to C-terminus: Trichothecene 15-O-acetyltransferase SAT16 (184 aa).

A substrate-binding site is contributed by histidine 154.

This sequence belongs to the trichothecene O-acetyltransferase family.

It functions in the pathway mycotoxin biosynthesis. In terms of biological role, trichothecene 15-O-acetyltransferase; part of the satratoxin SC2 cluster involved in the biosynthesis of satratoxins, trichothecene mycotoxins that are associated with human food poisonings. Satratoxins are suggested to be made by products of multiple gene clusters (SC1, SC2 and SC3) that encode 21 proteins in all, including polyketide synthases, acetyltransferases, and other enzymes expected to modify the trichothecene skeleton. SC1 encodes 10 proteins, SAT1 to SAT10. The largest are SAT8, which encodes a putative polyketide synthase (PKS) with a conventional non-reducing architecture, and SAT10, a putative protein containing four ankyrin repeats and thus may be involved in protein scaffolding. The putative short-chain reductase SAT3 may assist the PKS in some capacity. SAT6 contains a secretory lipase domain and acts probably as a trichothecene esterase. SAT5 encodes a putative acetyltransferase, and so, with SAT6, may affect endogenous protection from toxicity. The probable transcription factor SAT9 may regulate the expression of the SC1 cluster. SC2 encodes proteins SAT11 to SAT16, the largest of which encodes the putative reducing PKS SAT13. SAT11 is a cytochrome P450 monooxygenase, while SAT14 and SAT16 are probable acetyltransferases. The SC2 cluster may be regulated by the transcription factor SAT15. SC3 is a small cluster that encodes 5 proteins, SAT17 to SAT21. SAT21 is a putative MFS-type transporter which may have a role in exporting secondary metabolites. The four other proteins putatively encoded in SC3 include the taurine hydroxylase-like protein SAT17, the O-methyltransferase SAT18, the acetyltransferase SAT19, and the Cys6-type zinc finger SAT20, the latter being probably involved in regulation of SC3 expression. The protein is Trichothecene 15-O-acetyltransferase SAT16 of Stachybotrys chartarum (strain CBS 109288 / IBT 7711) (Toxic black mold).